Here is a 138-residue protein sequence, read N- to C-terminus: MASLPDTNKLLRNFSRCRNWEERYLYMIELGAKLPPLTDEQRQPENLIAGCQSQVWILLRMNHQNKVEFIGDSDAAIVKGLVAIVFILFQGKTTQEILDLDVTEYFGKLSLEQHLTPSRTQGLHAMIHAIRNRTSKMV.

Residue cysteine 51 is the Cysteine persulfide intermediate of the active site.

It belongs to the SufE family. As to quaternary structure, homodimer. Interacts with SufS.

The protein localises to the cytoplasm. Its pathway is cofactor biosynthesis; iron-sulfur cluster biosynthesis. Its function is as follows. Participates in cysteine desulfuration mediated by SufS. Cysteine desulfuration mobilizes sulfur from L-cysteine to yield L-alanine and constitutes an essential step in sulfur metabolism for biosynthesis of a variety of sulfur-containing biomolecules. Functions as a sulfur acceptor for SufS, by mediating the direct transfer of the sulfur atom from the S-sulfanylcysteine of SufS, an intermediate product of cysteine desulfuration process. This is Cysteine desulfuration protein SufE from Photorhabdus laumondii subsp. laumondii (strain DSM 15139 / CIP 105565 / TT01) (Photorhabdus luminescens subsp. laumondii).